Reading from the N-terminus, the 483-residue chain is Cysteine proteinase 1, mitochondrial (483 aa).

Residues 1–30 (MLPTSVSRSLYLKTFRSHLLRAPQIVLKRM) constitute a mitochondrion transit peptide. Active-site residues include C102, H398, and N421. K483 is a propeptide (removed in mature form; by autocatalysis).

This sequence belongs to the peptidase C1 family. In terms of assembly, homohexamer. Binds to nucleic acids. Binds single-stranded DNA and RNA with higher affinity than double-stranded DNA. In terms of processing, the N-terminus of isoform Cytoplasmic is blocked.

The protein resides in the mitochondrion. The protein localises to the cytoplasm. The enzyme catalyses Inactivates bleomycin B2 (a cytotoxic glycometallopeptide) by hydrolysis of a carboxyamide bond of beta-aminoalanine, but also shows general aminopeptidase activity. The specificity varies somewhat with source, but amino acid arylamides of Met, Leu and Ala are preferred.. Inhibited by E64, a specific inhibitor of cysteine proteases, N-ethylmaleimide, iodacetamide, and mercury and zinc ions. Its function is as follows. The normal physiological role of the enzyme is unknown, but it is not essential for the viability of yeast cells. Has aminopeptidase activity, shortening substrate peptides sequentially by 1 amino acid. Has bleomycin hydrolase activity, which can protect the cell from the toxic effects of bleomycin. Has homocysteine-thiolactonase activity, protecting the cell against homocysteine toxicity. Acts as a repressor in the GAL4 regulatory system, but this does not require either the peptidase or nucleic acid-binding activities. The sequence is that of Cysteine proteinase 1, mitochondrial (LAP3) from Saccharomyces cerevisiae (strain AWRI1631) (Baker's yeast).